The primary structure comprises 588 residues: ATP-dependent lipid A-core flippase (588 aa).

The next 6 helical transmembrane spans lie at 23 to 43, 56 to 76, 141 to 161, 162 to 182, 257 to 277, and 278 to 298; these read FWPV…IDAG, FITI…IGIT, DALT…TVMM, VICW…GIIV, LVIA…STVI, and TISA…IKPM. Positions 28–310 constitute an ABC transmembrane type-1 domain; it reads LLGVLANILY…LTTLNATIQR (283 aa). The 235-residue stretch at 342 to 576 folds into the ABC transporter domain; it reads IEFKHVYHAY…DGHYAQLYKV (235 aa). 375–382 provides a ligand contact to ATP; it reads GHSGSGKT.

The protein belongs to the ABC transporter superfamily. Lipid exporter (TC 3.A.1.106) family. Homodimer.

The protein localises to the cell inner membrane. It carries out the reaction ATP + H2O + lipid A-core oligosaccharideSide 1 = ADP + phosphate + lipid A-core oligosaccharideSide 2.. In terms of biological role, involved in lipopolysaccharide (LPS) biosynthesis. Translocates lipid A-core from the inner to the outer leaflet of the inner membrane. Transmembrane domains (TMD) form a pore in the inner membrane and the ATP-binding domain (NBD) is responsible for energy generation. The polypeptide is ATP-dependent lipid A-core flippase (Legionella pneumophila (strain Paris)).